Consider the following 296-residue polypeptide: Cytochrome bc1 complex cytochrome c subunit (296 aa).

Over residues 1–19 (MMETNPQTSEGAGKAQSSA) the composition is skewed to polar residues. Positions 1-27 (MMETNPQTSEGAGKAQSSAKKVKNRRK) are disordered. Residues 32-52 (VAGAMALTIGLSGAGILATAI) traverse the membrane as a helical segment. Cytochrome c domains follow at residues 67-147 (ALIA…AANG) and 177-255 (LDVS…KSTK). Positions 80, 83, 84, 190, 193, and 194 each coordinate heme c. A helical membrane pass occupies residues 274 to 294 (GLFMWGIGIMVLIAAAMWIGS).

In terms of assembly, the cytochrome bc1 complex is composed of a cytochrome b (QcrB), the Rieske iron-sulfur protein (QcrA) and a diheme cytochrome c (QcrC) subunit. The bc1 complex forms a supercomplex with cytochrome c oxidase (cytochrome aa3). In terms of processing, binds 2 heme c groups covalently per subunit.

It is found in the cell membrane. The enzyme catalyses a quinol + 2 Fe(III)-[cytochrome c](out) = a quinone + 2 Fe(II)-[cytochrome c](out) + 2 H(+)(out). In terms of biological role, cytochrome c1 subunit of the cytochrome bc1 complex, an essential component of the respiratory electron transport chain required for ATP synthesis. The bc1 complex catalyzes the oxidation of menaquinol and the reduction of cytochrome c in the respiratory chain. The bc1 complex operates through a Q-cycle mechanism that couples electron transfer to generation of the proton gradient that drives ATP synthesis. This chain is Cytochrome bc1 complex cytochrome c subunit (qcrC), found in Corynebacterium efficiens (strain DSM 44549 / YS-314 / AJ 12310 / JCM 11189 / NBRC 100395).